The chain runs to 804 residues: MYNHKVVEKKWQDYWAKHDTFKTGTDPKKKNYYALDMFPFPSGKGLHVGHPEGYTATDIVSRMKRAQGYNVLHPMGWDAFGLPTEQYALKTGEDPAVVTKNNIANFKRQLNKLGFSYDWDREITTSDPNYYKWTQWVFEQMYKKGLAYEAEVPVNWSPDLGTVVANEEVIDGKTERGGYPVYRRNMRQWMLKMTAYADRLLEDLDDLDWPEPVKEMQRNWIGRSVGAQVTFKIKDSDKTFDIFTTRPDTLFGCSYTVLAPENKLVQEITTDGHRDEVNAYIKKIESKSDLERTDLNKDKTGVFTGAYAINPVNGKEVPIWISDYVLASYGTGAVMAVPAHDDRDYAFAKKFDLPINQVLEGGDLSKAAFTEDGPHINSEFLNGLNIKDAKKKMVDWLEEHNCGEKKVNYKLRDWDFSRQRYWGEPIPVIHWEDGTTSLVPEDQLPLRLPHATDIKPSGTPESPLANLTDWVNVVDEMGRKGKRETNTMPNWAGSSWYYLRYVDPHNDKELADYDLLKQWLPVDLYIGGAEHAVRHLLYARFWHKVLYDLGVVPTKEPFQRLYNQGLILKNHEKMSKSKGNVVNPDEVIDEYGADSLRMYEMFMGPLDASIDWDDNGPASTKKFLDRVWRLFVNDLDLKAIPQERIVDKNDGELDKVYAETVKKVTEDFDALHFNTAISQMMVFINAAQKAKTIPREYVEGFVKLLAPVAPHMMEEIWQVFGHDESITYAKWPTYDPAKLVESTVEIMVQVNGKLRGKFEAAKDADRDDVQKQAMALPHVQKFLEGKDVKKVIVVPNKIVNIVAK.

The 'HIGH' region motif lies at 39 to 50; the sequence is PFPSGKGLHVGH. The 'KMSKS' region motif lies at 573–577; it reads KMSKS. An ATP-binding site is contributed by Lys-576.

It belongs to the class-I aminoacyl-tRNA synthetase family.

Its subcellular location is the cytoplasm. It carries out the reaction tRNA(Leu) + L-leucine + ATP = L-leucyl-tRNA(Leu) + AMP + diphosphate. This is Leucine--tRNA ligase from Lactobacillus helveticus (strain DPC 4571).